The sequence spans 124 residues: Large ribosomal subunit protein bL12 (124 aa).

Belongs to the bacterial ribosomal protein bL12 family. As to quaternary structure, homodimer. Part of the ribosomal stalk of the 50S ribosomal subunit. Forms a multimeric L10(L12)X complex, where L10 forms an elongated spine to which 2 to 4 L12 dimers bind in a sequential fashion. Binds GTP-bound translation factors.

Functionally, forms part of the ribosomal stalk which helps the ribosome interact with GTP-bound translation factors. Is thus essential for accurate translation. This Cupriavidus taiwanensis (strain DSM 17343 / BCRC 17206 / CCUG 44338 / CIP 107171 / LMG 19424 / R1) (Ralstonia taiwanensis (strain LMG 19424)) protein is Large ribosomal subunit protein bL12.